The chain runs to 83 residues: Small ribosomal subunit protein bS16 (83 aa).

This sequence belongs to the bacterial ribosomal protein bS16 family.

The protein is Small ribosomal subunit protein bS16 of Pseudomonas entomophila (strain L48).